The sequence spans 559 residues: Fanconi-associated nuclease 1 homolog (559 aa).

The Mn(2+) site is built by Glu-386, Asp-507, Glu-522, and Val-523. In terms of domain architecture, VRR-NUC spans 443 to 555 (DGSYRDAIRC…MPVAVCYVRW (113 aa)).

This sequence belongs to the FAN1 family. Mn(2+) serves as cofactor. The cofactor is Mg(2+).

It catalyses the reaction Hydrolytically removes 5'-nucleotides successively from the 3'-hydroxy termini of 3'-hydroxy-terminated oligonucleotides.. Functionally, nuclease required for the repair of DNA interstrand cross-links (ICL). Acts as a 5'-3' exonuclease that anchors at a cut end of DNA and cleaves DNA successively at every third nucleotide, allowing to excise an ICL from one strand through flanking incisions. Also has endonuclease activity toward 5'-flaps. The protein is Fanconi-associated nuclease 1 homolog of Pseudomonas aeruginosa (strain ATCC 15692 / DSM 22644 / CIP 104116 / JCM 14847 / LMG 12228 / 1C / PRS 101 / PAO1).